The sequence spans 314 residues: Secreted frizzled-related protein 1 (314 aa).

An N-terminal signal peptide occupies residues 1-31; that stretch reads MGVGRSARGRGGAASGVLLALAAALLAAGSA. The region spanning 53-169 is the FZ domain; sequence TKPPQCVDIP…FPEGDVCIAM (117 aa). 5 disulfide bridges follow: C58-C121, C68-C114, C105-C140, C129-C166, and C133-C157. N-linked (GlcNAc...) asparagine glycosylation is present at N173. Intrachain disulfides connect C186/C256, C189/C258, and C203/C306. Residues 186 to 306 form the NTR domain; that stretch reads CPPCDNELKS…FMKRMKNHEC (121 aa).

Belongs to the secreted frizzled-related protein (sFRP) family. In terms of assembly, interacts with WNT8, WNT1, WNT2, WNT4 and FRZD6. Interacts with MYOC. Highly expressed in kidney and embryonic heart. Also highly expressed in the eye, where it is principally localized to the ciliary body and the lens epithelium. Weaker expression in heart, lung and brain. In the brain, is expressed exclusively in the choroid plexus.

It localises to the secreted. In terms of biological role, soluble frizzled-related proteins (sFRPS) function as modulators of Wnt signaling through direct interaction with Wnts. They have a role in regulating cell growth and differentiation in specific cell types. SFRP1 decreases intracellular beta-catenin levels. Has antiproliferative effects on vascular cells, in vitro and in vivo, and can induce, in vivo, an angiogenic response. In vascular cell cycle, delays the G1 phase and entry into the S phase. In kidney development, inhibits tubule formation and bud growth in metanephroi. Inhibits WNT1/WNT4-mediated TCF-dependent transcription. This Mus musculus (Mouse) protein is Secreted frizzled-related protein 1.